Reading from the N-terminus, the 344-residue chain is Heat-inducible transcription repressor HrcA (344 aa).

It belongs to the HrcA family.

In terms of biological role, negative regulator of class I heat shock genes (grpE-dnaK-dnaJ and groELS operons). Prevents heat-shock induction of these operons. The sequence is that of Heat-inducible transcription repressor HrcA from Streptococcus pneumoniae serotype 19F (strain G54).